The following is a 77-amino-acid chain: U14-theraphotoxin-Cg1a 2 (77 aa).

Residues 1-21 (MKTSVLLVILGIAAITVQCTA) form the signal peptide. The propeptide occupies 22–49 (SESVKQDSLRTFVDAVLGWNAEMASEAR). 3 disulfide bridges follow: C50/C64, C57/C69, and C63/C75. K77 is subject to Lysine amide.

The protein belongs to the neurotoxin 10 (Hwtx-1) family. 65 (Jztx-21) subfamily. As to expression, expressed by the venom gland.

It is found in the secreted. Functionally, probable ion channel inhibitor. The protein is U14-theraphotoxin-Cg1a 2 of Chilobrachys guangxiensis (Chinese earth tiger tarantula).